Consider the following 372-residue polypeptide: Queuine tRNA-ribosyltransferase (372 aa).

Asp90 serves as the catalytic Proton acceptor. Substrate contacts are provided by residues 90–94 (DSGGF), Asp144, Gln193, and Gly220. The tract at residues 251–257 (GVGTPED) is RNA binding. Catalysis depends on Asp270, which acts as the Nucleophile. The RNA binding; important for wobble base 34 recognition stretch occupies residues 275 to 279 (TRNAR). Zn(2+) contacts are provided by Cys308, Cys310, Cys313, and His339.

It belongs to the queuine tRNA-ribosyltransferase family. In terms of assembly, homodimer. Within each dimer, one monomer is responsible for RNA recognition and catalysis, while the other monomer binds to the replacement base PreQ1. Requires Zn(2+) as cofactor.

It carries out the reaction 7-aminomethyl-7-carbaguanine + guanosine(34) in tRNA = 7-aminomethyl-7-carbaguanosine(34) in tRNA + guanine. It functions in the pathway tRNA modification; tRNA-queuosine biosynthesis. Functionally, catalyzes the base-exchange of a guanine (G) residue with the queuine precursor 7-aminomethyl-7-deazaguanine (PreQ1) at position 34 (anticodon wobble position) in tRNAs with GU(N) anticodons (tRNA-Asp, -Asn, -His and -Tyr). Catalysis occurs through a double-displacement mechanism. The nucleophile active site attacks the C1' of nucleotide 34 to detach the guanine base from the RNA, forming a covalent enzyme-RNA intermediate. The proton acceptor active site deprotonates the incoming PreQ1, allowing a nucleophilic attack on the C1' of the ribose to form the product. After dissociation, two additional enzymatic reactions on the tRNA convert PreQ1 to queuine (Q), resulting in the hypermodified nucleoside queuosine (7-(((4,5-cis-dihydroxy-2-cyclopenten-1-yl)amino)methyl)-7-deazaguanosine). The chain is Queuine tRNA-ribosyltransferase from Sulfurimonas denitrificans (strain ATCC 33889 / DSM 1251) (Thiomicrospira denitrificans (strain ATCC 33889 / DSM 1251)).